A 430-amino-acid chain; its full sequence is Probable proton-coupled zinc antiporter SLC30A4 (430 aa).

Over 1 to 113 the chain is Cytoplasmic; the sequence is MAGPGAWKRL…LLKQRKVKTR (113 aa). Serine 36 carries the post-translational modification Phosphoserine. A helical membrane pass occupies residues 114–134; that stretch reads LTIAAVLYLLFMIGELVGGYM. Over 135–143 the chain is Lumenal; the sequence is ANSLAIMTD. Residues 144–164 form a helical membrane-spanning segment; it reads ALHMLTDLSAIILTLLALWLS. Zn(2+) is bound by residues histidine 146 and aspartate 150. Over 165 to 178 the chain is Cytoplasmic; it reads SKSPTRRFTFGFHR. The chain crosses the membrane as a helical span at residues 179 to 199; sequence LEVLSAMISVMLVYVLMGFLL. The Lumenal portion of the chain corresponds to 200 to 216; sequence YEAVQRTIHMNYEINGD. Residues 217–237 traverse the membrane as a helical segment; it reads VMLITAAVGVAVNVIMGFLLN. The Cytoplasmic portion of the chain corresponds to 238–275; the sequence is QSGHHHSHAHSHSLPSNSPSMVSSGHNHGQDSLAVRAA. The segment at 240–265 is zinc binding; it reads GHHHSHAHSHSLPSNSPSMVSSGHNH. The interval 245-264 is disordered; that stretch reads HAHSHSLPSNSPSMVSSGHN. Residues 249-263 show a composition bias toward low complexity; sequence HSLPSNSPSMVSSGH. A helical transmembrane segment spans residues 276–296; sequence FVHALGDLVQSVGVLIAAYII. Zn(2+) is bound by residues histidine 278 and aspartate 282. At 297 to 311 the chain is on the lumenal side; the sequence is RFKPEYKIADPICTY. A helical membrane pass occupies residues 312 to 332; that stretch reads IFSLLVAFTTFRIIWDTVVII. Topologically, residues 333-430 are cytoplasmic; it reads LEGVPSHLNV…TCANCHSSST (98 aa).

The protein belongs to the cation diffusion facilitator (CDF) transporter (TC 2.A.4) family. SLC30A subfamily. In terms of assembly, homodimerization could regulate efficiency for zinc transport. Interacts with TMEM163. Widely expressed. Highly expressed in the brain and in mammary epithelial cell lines.

It localises to the endosome membrane. The protein resides in the late endosome membrane. It is found in the lysosome membrane. The catalysed reaction is Zn(2+)(in) + 2 H(+)(out) = Zn(2+)(out) + 2 H(+)(in). In terms of biological role, probable proton-coupled zinc ion antiporter mediating zinc import from cytoplasm potentially into the endocytic compartment. Controls zinc deposition in milk. This is Probable proton-coupled zinc antiporter SLC30A4 from Mus musculus (Mouse).